The sequence spans 365 residues: Anthranilate phosphoribosyltransferase (365 aa).

Residues G96, 99–100 (GD), T104, 106–109 (NIST), 124–132 (KHGNRSVSS), and S136 contribute to the 5-phospho-alpha-D-ribose 1-diphosphate site. An anthranilate-binding site is contributed by G96. S108 lines the Mg(2+) pocket. Residue N127 coordinates anthranilate. R182 is an anthranilate binding site. D240 and E241 together coordinate Mg(2+).

The protein belongs to the anthranilate phosphoribosyltransferase family. As to quaternary structure, homodimer. Requires Mg(2+) as cofactor.

The enzyme catalyses N-(5-phospho-beta-D-ribosyl)anthranilate + diphosphate = 5-phospho-alpha-D-ribose 1-diphosphate + anthranilate. Its pathway is amino-acid biosynthesis; L-tryptophan biosynthesis; L-tryptophan from chorismate: step 2/5. Catalyzes the transfer of the phosphoribosyl group of 5-phosphorylribose-1-pyrophosphate (PRPP) to anthranilate to yield N-(5'-phosphoribosyl)-anthranilate (PRA). In Colwellia psychrerythraea (strain 34H / ATCC BAA-681) (Vibrio psychroerythus), this protein is Anthranilate phosphoribosyltransferase.